We begin with the raw amino-acid sequence, 89 residues long: Large ribosomal subunit protein bL27 (89 aa).

The segment at 1 to 26 (MAHKKGVGSSRNGRDSESKRLGVKEG) is disordered. The span at 12–26 (NGRDSESKRLGVKEG) shows a compositional bias: basic and acidic residues.

It belongs to the bacterial ribosomal protein bL27 family.

The chain is Large ribosomal subunit protein bL27 from Desulforamulus reducens (strain ATCC BAA-1160 / DSM 100696 / MI-1) (Desulfotomaculum reducens).